A 697-amino-acid chain; its full sequence is Histone-lysine N-methyltransferase SETDB2 (697 aa).

Positions Leu-172–Gln-242 constitute an MBD domain. Positions Lys-304 to Gly-378 constitute a Pre-SET domain. Residues Cys-306, Cys-308, Cys-312, Cys-318, Cys-320, Cys-359, Cys-363, Cys-365, and Cys-370 each coordinate Zn(2+). One can recognise an SET domain in the interval Leu-381–Asn-672. Lys-391–Trp-393 contributes to the S-adenosyl-L-methionine binding site. Disordered stretches follow at residues Lys-438–Ser-461 and Val-529–Pro-605. Residues Ser-565–His-581 are compositionally biased toward low complexity. S-adenosyl-L-methionine contacts are provided by residues Arg-626 and Asn-629–His-630. Positions 632, 685, 687, and 692 each coordinate Zn(2+).

Belongs to the class V-like SAM-binding methyltransferase superfamily.

The protein localises to the nucleus. The protein resides in the chromosome. The catalysed reaction is N(6),N(6)-dimethyl-L-lysyl(9)-[histone H3] + S-adenosyl-L-methionine = N(6),N(6),N(6)-trimethyl-L-lysyl(9)-[histone H3] + S-adenosyl-L-homocysteine + H(+). Functionally, histone methyltransferase involved in left-right axis specification in early development and mitosis. Specifically trimethylates 'Lys-9' of histone H3 (H3K9me3). H3K9me3 represents a specific tag for epigenetic transcriptional repression by recruiting HP1 (CBX1, CBX3 and/or CBX5) proteins to methylated histones. Contributes to H3K9me3 in both the interspersed repetitive elements and centromere-associated repeats. Plays a role in chromosome condensation and segregation during mitosis. The sequence is that of Histone-lysine N-methyltransferase SETDB2 (setdb2) from Xenopus tropicalis (Western clawed frog).